We begin with the raw amino-acid sequence, 596 residues long: Pescadillo homolog (596 aa).

The BRCT domain maps to 347–440 (PTSTLFSEFV…ELVPANLYLP (94 aa)). The tract at residues 449–552 (SPWGDSVGYD…EEKDLKLIMM (104 aa)) is disordered. A coiled-coil region spans residues 460-596 (AAELAEEEAE…TKAKLKKLEN (137 aa)). The segment covering 463 to 500 (LAEEEAESEEEEEVSDEAEGDEEATLAAEEDEEDEAEA) has biased composition (acidic residues). A compositionally biased stretch (basic and acidic residues) spans 501-510 (EELRAQKELE). Low complexity predominate over residues 519–529 (SEAADSAAPSK).

This sequence belongs to the pescadillo family. As to quaternary structure, component of the NOP7 complex, composed of ERB1, NOP7 and YTM1. The complex is held together by ERB1, which interacts with NOP7 via its N-terminal domain and with YTM1 via a high-affinity interaction between the seven-bladed beta-propeller domains of the 2 proteins. The NOP7 complex associates with the 66S pre-ribosome.

The protein resides in the nucleus. The protein localises to the nucleolus. Its subcellular location is the nucleoplasm. Its function is as follows. Component of the NOP7 complex, which is required for maturation of the 25S and 5.8S ribosomal RNAs and formation of the 60S ribosome. The sequence is that of Pescadillo homolog from Eremothecium gossypii (strain ATCC 10895 / CBS 109.51 / FGSC 9923 / NRRL Y-1056) (Yeast).